Here is a 107-residue protein sequence, read N- to C-terminus: Iron-sulfur cluster assembly protein CyaY (107 aa).

This sequence belongs to the frataxin family.

In terms of biological role, involved in iron-sulfur (Fe-S) cluster assembly. May act as a regulator of Fe-S biogenesis. This is Iron-sulfur cluster assembly protein CyaY from Neisseria meningitidis serogroup B (strain ATCC BAA-335 / MC58).